The chain runs to 135 residues: Protein NrdI (135 aa).

It belongs to the NrdI family.

Its function is as follows. Probably involved in ribonucleotide reductase function. This is Protein NrdI from Brucella abortus (strain S19).